A 203-amino-acid polypeptide reads, in one-letter code: Recombination protein RecR (203 aa).

A C4-type zinc finger spans residues 58–73; the sequence is CDYCGNLDIVSICNIC. The 97-residue stretch at 81 to 177 folds into the Toprim domain; it reads STIAVVESVA…KISKLASGIP (97 aa).

Belongs to the RecR family.

Functionally, may play a role in DNA repair. It seems to be involved in an RecBC-independent recombinational process of DNA repair. It may act with RecF and RecO. In Orientia tsutsugamushi (strain Ikeda) (Rickettsia tsutsugamushi), this protein is Recombination protein RecR.